The chain runs to 881 residues: Translation initiation factor IF-2 (881 aa).

Disordered stretches follow at residues 31 to 147 (KLAQ…TKVP) and 165 to 291 (SVVG…HYDE). Residues 42–55 (NSSEKPSAKVAEKV) are compositionally biased toward basic and acidic residues. Residues 68–77 (ATPESVSSET) show a composition bias toward polar residues. Residues 114-128 (VEEEIASSTDSEPEV) are compositionally biased toward acidic residues. Positions 191 to 203 (PKKEDKPAPKERS) are enriched in basic and acidic residues. Residues 204-233 (GQAQAKPQQSSEASSENKPHSPNNNRSSQP) show a composition bias toward polar residues. The span at 235 to 267 (YRRDTSKKPGSDFRDRAKKDDNPKAFTGRDRYG) shows a compositional bias: basic and acidic residues. The span at 278 to 287 (RKKRVQKTKK) shows a compositional bias: basic residues. The 170-residue stretch at 387–556 (IRPPIVAFMG…ALQAEVLELK (170 aa)) folds into the tr-type G domain. A G1 region spans residues 396-403 (GHVDHGKT). 396 to 403 (GHVDHGKT) contributes to the GTP binding site. The interval 421–425 (AITQH) is G2. The G3 stretch occupies residues 442–445 (DTPG). GTP contacts are provided by residues 442 to 446 (DTPGH) and 496 to 499 (NKCD). A G4 region spans residues 496–499 (NKCD). The G5 stretch occupies residues 532–534 (SAK).

This sequence belongs to the TRAFAC class translation factor GTPase superfamily. Classic translation factor GTPase family. IF-2 subfamily.

It is found in the cytoplasm. In terms of biological role, one of the essential components for the initiation of protein synthesis. Protects formylmethionyl-tRNA from spontaneous hydrolysis and promotes its binding to the 30S ribosomal subunits. Also involved in the hydrolysis of GTP during the formation of the 70S ribosomal complex. This chain is Translation initiation factor IF-2, found in Chlamydia felis (strain Fe/C-56) (Chlamydophila felis).